The sequence spans 285 residues: Protease HtpX homolog (285 aa).

Helical transmembrane passes span 7 to 27 (TAMLMAGITALFIVIGGMIGG) and 30 to 50 (GMTIALLFALAMNFFSYWFSD). Histidine 131 is a Zn(2+) binding site. Glutamate 132 is a catalytic residue. Histidine 135 lines the Zn(2+) pocket. Helical transmembrane passes span 146–166 (ITATMAGAISALANFAMFFGG) and 177–197 (IAGIAVALLAPIAGALIQMAI). Residue glutamate 202 coordinates Zn(2+).

It belongs to the peptidase M48B family. Zn(2+) is required as a cofactor.

It localises to the cell inner membrane. In Burkholderia ambifaria (strain MC40-6), this protein is Protease HtpX homolog.